The primary structure comprises 320 residues: NAD kinase (320 aa).

The active-site Proton acceptor is Asp-96. Residues 96–97 (DG), Arg-101, 170–171 (NE), Asp-200, and 211–216 (TAYAFS) each bind NAD(+).

The protein belongs to the NAD kinase family. Requires a divalent metal cation as cofactor.

It localises to the cytoplasm. It carries out the reaction NAD(+) + ATP = ADP + NADP(+) + H(+). Functionally, involved in the regulation of the intracellular balance of NAD and NADP, and is a key enzyme in the biosynthesis of NADP. Catalyzes specifically the phosphorylation on 2'-hydroxyl of the adenosine moiety of NAD to yield NADP. The sequence is that of NAD kinase from Rhodococcus opacus (strain B4).